The primary structure comprises 391 residues: Coiled-coil domain-containing protein 85C (391 aa).

Coiled-coil stretches lie at residues 19–86 (EELL…RELC) and 116–146 (KEVG…KEII). Disordered stretches follow at residues 155 to 238 (GAGS…LNDS) and 278 to 303 (PYHS…TRVT). Over residues 157–175 (GSRSSIDSQNSLTNLNGSS) the composition is skewed to polar residues. Over residues 182 to 194 (DGSSTSSTGSAGS) the composition is skewed to low complexity. The span at 280-303 (HSESQLSPLPQYQEPLQNGSTRVT) shows a compositional bias: polar residues.

This sequence belongs to the CCDC85 family.

It localises to the cell junction. Its subcellular location is the tight junction. It is found in the adherens junction. May play a role in cell-cell adhesion and epithelium development through its interaction with proteins of the beta-catenin family. May play an important role in cortical development, especially in the maintenance of radial glia. This Xenopus tropicalis (Western clawed frog) protein is Coiled-coil domain-containing protein 85C (ccdc85c).